Here is a 542-residue protein sequence, read N- to C-terminus: Serine/threonine-protein phosphatase 2A regulatory subunit pptr-1 (542 aa).

Disordered regions lie at residues 1-28 (MHGS…TGGQ) and 500-542 (DYLK…PAKK). Polar residues predominate over residues 528–542 (KKSSTGSETTTPAKK).

Belongs to the phosphatase 2A regulatory subunit B56 family. As to quaternary structure, part of a complex consisting of a common heterodimeric core enzyme, composed of catalytic subunit let-92 and constant regulatory subunit paa-1, that associates with a variety of regulatory subunits which confer distinct properties to the holoenzyme. Interacts with akt-1 but not akt-2. Interacts with sgk-1. Interacts with P granule components meg-1, meg-3 and meg-4. Expressed in pharynx, vulva and spermatheca.

It is found in the cytoplasm. Its function is as follows. Probable regulatory subunit of serine/threonine-protein phosphatase let-92 which negatively regulates the insulin receptor signaling cascade composed of daf-2, age-1, akt-1, akt-2 and sgk-1 by promoting the dephosphorylation of akt-1 on 'Thr-350'. Negatively regulates several functions controlled by the insulin pathway including dauer formation, lifespan, fat storage and stress resistance. Plays a role in the asymmetric segregation of the P granule components during embryonic cell divisions but does not play an essential role in specifying germ cell fate. Within a PP2A phosphatase complex, acts redundantly with pptr-2, to dephosphorylate P granule components including meg-1 and meg-3 to promote the assembly and accumulation of zygotic P granules in the posterior cytoplasm during zygote polarization, and thus maintain P granule distribution and segregation in early stage embryos following meiosis. In adults, required to promote germ cell proliferation and differentiation when exposed to thermic stress. The sequence is that of Serine/threonine-protein phosphatase 2A regulatory subunit pptr-1 from Caenorhabditis elegans.